The chain runs to 955 residues: Leucine--tRNA ligase (955 aa).

The 'HIGH' region motif lies at 51 to 61 (PYLNGVLHAGH). Positions 647–651 (KLSKS) match the 'KMSKS' region motif. Lys650 lines the ATP pocket.

It belongs to the class-I aminoacyl-tRNA synthetase family.

It is found in the cytoplasm. It catalyses the reaction tRNA(Leu) + L-leucine + ATP = L-leucyl-tRNA(Leu) + AMP + diphosphate. The sequence is that of Leucine--tRNA ligase from Methanococcus maripaludis (strain C7 / ATCC BAA-1331).